Reading from the N-terminus, the 737-residue chain is Alpha-adducin (737 aa).

N-acetylmethionine is present on Met-1. Residues 1–21 (MNGDSRAAVVTSPPPTTAPHK) form a disordered region. At Ser-12 the chain carries Phosphoserine. Ser-59 is modified (phosphoserine; by PKA). Ser-64 bears the Phosphoserine mark. Phosphothreonine is present on Thr-331. Residues Ser-334, Ser-353, Ser-355, Ser-358, and Ser-366 each carry the phosphoserine modification. Ser-408 is modified (phosphoserine; by PKA). Polar residues predominate over residues 419-430 (YSFTSDGDSGTC). Disordered regions lie at residues 419 to 490 (YSFT…NLFV) and 576 to 737 (RREV…KSES). Ser-427 bears the Phosphoserine mark. At Thr-429 the chain carries Phosphothreonine. Ser-431 carries the post-translational modification Phosphoserine. Phosphoserine; by PKA is present on Ser-436. Phosphothreonine; by ROCK2 is present on Thr-445. Ser-464 and Ser-465 each carry phosphoserine. Residue Thr-480 is modified to Phosphothreonine; by ROCK2. Ser-481 bears the Phosphoserine; by PKA mark. Positions 576 to 601 (RREVERKQKGSEENLDEAREQKEKSP) are enriched in basic and acidic residues. 3 positions are modified to phosphoserine: Ser-586, Ser-600, and Ser-613. Over residues 602–614 (PDQPAVPYPPPST) the composition is skewed to pro residues. Thr-614 bears the Phosphothreonine mark. Residues Ser-678, Ser-707, Ser-710, and Ser-714 each carry the phosphoserine modification. Over residues 687-714 (PVAEEAAPSAAEEGAAADPGSDGSPGKS) the composition is skewed to low complexity. Basic residues predominate over residues 715 to 737 (PSKKKKKFRTPSFLKKSKKKSES). The residue at position 716 (Ser-716) is a Phosphoserine; by PKC. The interaction with calmodulin stretch occupies residues 717–734 (KKKKKFRTPSFLKKSKKK). Residue Ser-726 is modified to Phosphoserine; by PKA and PKC.

It belongs to the aldolase class II family. Adducin subfamily. As to quaternary structure, heterodimer of an alpha and a beta subunit or an alpha and a gamma subunit.

Its subcellular location is the cytoplasm. The protein localises to the cytoskeleton. It localises to the cell membrane. Functionally, membrane-cytoskeleton-associated protein that promotes the assembly of the spectrin-actin network. Binds to calmodulin. This is Alpha-adducin (ADD1) from Pongo abelii (Sumatran orangutan).